The sequence spans 442 residues: Type 3 secretion system ATPase (442 aa).

173–178 (GVGKST) serves as a coordination point for ATP.

The protein belongs to the ATPase alpha/beta chains family. T3SS ATPase subfamily. As to quaternary structure, the core secretion machinery of the T3SS is composed of approximately 20 different proteins, including cytoplasmic components, a base, an export apparatus and a needle. This subunit is part of the cytosolic complex. Forms homohexamers.

Its subcellular location is the cytoplasm. It catalyses the reaction ATP + H2O + cellular proteinSide 1 = ADP + phosphate + cellular proteinSide 2.. Its function is as follows. ATPase component of the type III secretion system (T3SS), also called injectisome, which is used to inject bacterial effector proteins into eukaryotic host cells. Acts as a molecular motor to provide the energy that is required for the export of proteins. Required for type III secretion apparatus (T3SA) formation, proper protein secretion, host cell invasion and virulence. May play a critical role in T3SS substrate recognition, disassembly of the effector/chaperone complex and unfolding of the effector in an ATP-dependent manner prior to secretion. This is Type 3 secretion system ATPase from Xanthomonas euvesicatoria.